A 95-amino-acid chain; its full sequence is Aspartyl/glutamyl-tRNA(Asn/Gln) amidotransferase subunit C (95 aa).

The protein belongs to the GatC family. As to quaternary structure, heterotrimer of A, B and C subunits.

The catalysed reaction is L-glutamyl-tRNA(Gln) + L-glutamine + ATP + H2O = L-glutaminyl-tRNA(Gln) + L-glutamate + ADP + phosphate + H(+). It carries out the reaction L-aspartyl-tRNA(Asn) + L-glutamine + ATP + H2O = L-asparaginyl-tRNA(Asn) + L-glutamate + ADP + phosphate + 2 H(+). Functionally, allows the formation of correctly charged Asn-tRNA(Asn) or Gln-tRNA(Gln) through the transamidation of misacylated Asp-tRNA(Asn) or Glu-tRNA(Gln) in organisms which lack either or both of asparaginyl-tRNA or glutaminyl-tRNA synthetases. The reaction takes place in the presence of glutamine and ATP through an activated phospho-Asp-tRNA(Asn) or phospho-Glu-tRNA(Gln). The protein is Aspartyl/glutamyl-tRNA(Asn/Gln) amidotransferase subunit C of Pelobacter propionicus (strain DSM 2379 / NBRC 103807 / OttBd1).